The sequence spans 77 residues: MESIFNNSFATLVAYVGIVSIYLLVIPLILFYWMNNRWNVMGKFERLIVYGLVFLFFPGLILFSPFLNLRLRGDSKG.

2 consecutive transmembrane segments (helical) span residues 12 to 32 (LVAYVGIVSIYLLVIPLILFY) and 47 to 67 (LIVYGLVFLFFPGLILFSPFL).

It belongs to the complex I NdhL subunit family. As to quaternary structure, NDH-1 can be composed of about 15 different subunits; different subcomplexes with different compositions have been identified which probably have different functions.

It is found in the cellular thylakoid membrane. It carries out the reaction a plastoquinone + NADH + (n+1) H(+)(in) = a plastoquinol + NAD(+) + n H(+)(out). The enzyme catalyses a plastoquinone + NADPH + (n+1) H(+)(in) = a plastoquinol + NADP(+) + n H(+)(out). Its function is as follows. NDH-1 shuttles electrons from an unknown electron donor, via FMN and iron-sulfur (Fe-S) centers, to quinones in the respiratory and/or the photosynthetic chain. The immediate electron acceptor for the enzyme in this species is believed to be plastoquinone. Couples the redox reaction to proton translocation, and thus conserves the redox energy in a proton gradient. Cyanobacterial NDH-1 also plays a role in inorganic carbon-concentration. In Prochlorococcus marinus subsp. pastoris (strain CCMP1986 / NIES-2087 / MED4), this protein is NAD(P)H-quinone oxidoreductase subunit L.